A 191-amino-acid polypeptide reads, in one-letter code: dCTP deaminase (191 aa).

DCTP-binding positions include 112-117, 136-138, Gln157, Tyr173, and Gln183; these read KSTYAR and TLE. Glu138 (proton donor/acceptor) is an active-site residue.

Belongs to the dCTP deaminase family. In terms of assembly, homotrimer.

The enzyme catalyses dCTP + H2O + H(+) = dUTP + NH4(+). The protein operates within pyrimidine metabolism; dUMP biosynthesis; dUMP from dCTP (dUTP route): step 1/2. Catalyzes the deamination of dCTP to dUTP. The protein is dCTP deaminase of Xylella fastidiosa (strain M12).